A 79-amino-acid chain; its full sequence is Large ribosomal subunit protein bL28 (79 aa).

It belongs to the bacterial ribosomal protein bL28 family.

The sequence is that of Large ribosomal subunit protein bL28 from Porphyromonas gingivalis (strain ATCC 33277 / DSM 20709 / CIP 103683 / JCM 12257 / NCTC 11834 / 2561).